The following is a 162-amino-acid chain: MRNITSFFKTFLLWELLKGMKVTGKHFFTRKVTVQYPDEKTPISNRFRGLHALRRYENGEERCIACKLCEVVCPALAITINSTEREDGSRRTSSYEIDLFKCIFCGYCEESCPVDSIVETNILEYHFEERGENIMTKAKLLAIGDKYEAQIAADRLQDKDFR.

4Fe-4S ferredoxin-type domains are found at residues 54–83 and 93–122; these read RRYE…INST and SSYE…ETNI. [4Fe-4S] cluster contacts are provided by Cys63, Cys66, Cys69, Cys73, Cys102, Cys105, Cys108, and Cys112.

It belongs to the complex I 23 kDa subunit family. In terms of assembly, NDH-1 is composed of 14 different subunits. Subunits NuoA, H, J, K, L, M, N constitute the membrane sector of the complex. [4Fe-4S] cluster is required as a cofactor.

It is found in the cell inner membrane. It catalyses the reaction a quinone + NADH + 5 H(+)(in) = a quinol + NAD(+) + 4 H(+)(out). Its function is as follows. NDH-1 shuttles electrons from NADH, via FMN and iron-sulfur (Fe-S) centers, to quinones in the respiratory chain. The immediate electron acceptor for the enzyme in this species is believed to be ubiquinone. Couples the redox reaction to proton translocation (for every two electrons transferred, four hydrogen ions are translocated across the cytoplasmic membrane), and thus conserves the redox energy in a proton gradient. The sequence is that of NADH-quinone oxidoreductase subunit I from Francisella philomiragia subsp. philomiragia (strain ATCC 25017 / CCUG 19701 / FSC 153 / O#319-036).